Reading from the N-terminus, the 713-residue chain is Ribosomal RNA large subunit methyltransferase K/L (713 aa).

One can recognise a THUMP domain in the interval 43-154; sequence LAYRITLWTR…NGVITIAMNF (112 aa).

It belongs to the methyltransferase superfamily. RlmKL family.

The protein localises to the cytoplasm. It catalyses the reaction guanosine(2445) in 23S rRNA + S-adenosyl-L-methionine = N(2)-methylguanosine(2445) in 23S rRNA + S-adenosyl-L-homocysteine + H(+). It carries out the reaction guanosine(2069) in 23S rRNA + S-adenosyl-L-methionine = N(2)-methylguanosine(2069) in 23S rRNA + S-adenosyl-L-homocysteine + H(+). Its function is as follows. Specifically methylates the guanine in position 2445 (m2G2445) and the guanine in position 2069 (m7G2069) of 23S rRNA. The polypeptide is Ribosomal RNA large subunit methyltransferase K/L (Shewanella sp. (strain ANA-3)).